Consider the following 776-residue polypeptide: Ankyrin repeat and EF-hand domain-containing protein 1 (776 aa).

ANK repeat units lie at residues 47-76 (NGLS…HPDV), 184-213 (TGRT…EVNA), 217-246 (DRHH…DVGL), and 250-279 (NGNT…DLKW). The EF-hand domain maps to 335-369 (EREAFLREAFAVLDRGDGSISKNDFVMVLEERQDY). ANK repeat units lie at residues 524–553 (YYKT…NVNA), 557–586 (FLWT…LIDA), 590–619 (NNST…KFQL), and 623–652 (KGHS…NLPK).

The sequence is that of Ankyrin repeat and EF-hand domain-containing protein 1 (ANKEF1) from Homo sapiens (Human).